A 307-amino-acid polypeptide reads, in one-letter code: Aspartate carbamoyltransferase catalytic subunit (307 aa).

Carbamoyl phosphate-binding residues include R59 and T60. Residue K87 coordinates L-aspartate. R109, H137, and Q140 together coordinate carbamoyl phosphate. L-aspartate is bound by residues R173 and R223. Carbamoyl phosphate-binding residues include G266 and P267.

Belongs to the aspartate/ornithine carbamoyltransferase superfamily. ATCase family. As to quaternary structure, heterododecamer (2C3:3R2) of six catalytic PyrB chains organized as two trimers (C3), and six regulatory PyrI chains organized as three dimers (R2).

It carries out the reaction carbamoyl phosphate + L-aspartate = N-carbamoyl-L-aspartate + phosphate + H(+). It participates in pyrimidine metabolism; UMP biosynthesis via de novo pathway; (S)-dihydroorotate from bicarbonate: step 2/3. In terms of biological role, catalyzes the condensation of carbamoyl phosphate and aspartate to form carbamoyl aspartate and inorganic phosphate, the committed step in the de novo pyrimidine nucleotide biosynthesis pathway. This is Aspartate carbamoyltransferase catalytic subunit from Helicobacter pylori (strain G27).